The following is a 437-amino-acid chain: Trigger factor (437 aa).

In terms of domain architecture, PPIase FKBP-type spans glycine 161–proline 246.

The protein belongs to the FKBP-type PPIase family. Tig subfamily.

The protein localises to the cytoplasm. The catalysed reaction is [protein]-peptidylproline (omega=180) = [protein]-peptidylproline (omega=0). Its function is as follows. Involved in protein export. Acts as a chaperone by maintaining the newly synthesized protein in an open conformation. Functions as a peptidyl-prolyl cis-trans isomerase. This chain is Trigger factor, found in Alcanivorax borkumensis (strain ATCC 700651 / DSM 11573 / NCIMB 13689 / SK2).